Reading from the N-terminus, the 118-residue chain is uncharacterized protein (118 aa).

Residues 25 to 85 (AEQPGSGGIA…SSSSTPSRAR (61 aa)) form a disordered region. Residues 71–83 (RPSASSSSSTPSR) are compositionally biased toward low complexity.

This is an uncharacterized protein from Azospirillum brasilense.